Consider the following 196-residue polypeptide: Putative 3-methyladenine DNA glycosylase (196 aa).

This sequence belongs to the DNA glycosylase MPG family.

The protein is Putative 3-methyladenine DNA glycosylase of Chlamydia pneumoniae (Chlamydophila pneumoniae).